The primary structure comprises 184 residues: Exosome complex protein LRP1 (184 aa).

The tract at residues 157–184 (DSTDHIRKASSKKSKRLDKVGKKKGGKK) is disordered. The segment covering 164–184 (KASSKKSKRLDKVGKKKGGKK) has biased composition (basic residues).

Belongs to the C1D family. In terms of assembly, associates with nuclear form of the RNA exosome complex. Interacts with RRP4, RRP6, RRP45 and RRP46.

The protein resides in the nucleus. In terms of biological role, required for exosome-dependent processing of pre-rRNA and small nucleolar RNA (snRNA) precursors. Involved in processing of 35S pre-rRNA at the A0, A1 and A2 sites. Required for activity of RRP6 in 7S pre-rRNA processing. Also has a role in 3'-processing of U4 and U5 small nuclear RNAs (snRNAs). Acts as a mRNA export factor. Mediates mRNA degradation upon UV irradiation. Maintains genome integrity where it is involved in both non-homologous end joining (NHEJ) and homologous recombination pathway repair of double strand DNA breaks. During NHEJ, required for joining 3'-overhanging ends. Also involved in telomere length regulation and maintenance. This Saccharomyces cerevisiae (strain ATCC 204508 / S288c) (Baker's yeast) protein is Exosome complex protein LRP1 (LRP1).